We begin with the raw amino-acid sequence, 56 residues long: Large ribosomal subunit protein uL30 (56 aa).

It belongs to the universal ribosomal protein uL30 family. In terms of assembly, part of the 50S ribosomal subunit.

This chain is Large ribosomal subunit protein uL30, found in Nitratidesulfovibrio vulgaris (strain DSM 19637 / Miyazaki F) (Desulfovibrio vulgaris).